The following is a 125-amino-acid chain: Holo-[acyl-carrier-protein] synthase (125 aa).

Residues Asp8 and Glu55 each contribute to the Mg(2+) site.

It belongs to the P-Pant transferase superfamily. AcpS family. It depends on Mg(2+) as a cofactor.

The protein resides in the cytoplasm. It catalyses the reaction apo-[ACP] + CoA = holo-[ACP] + adenosine 3',5'-bisphosphate + H(+). Its function is as follows. Transfers the 4'-phosphopantetheine moiety from coenzyme A to a Ser of acyl-carrier-protein. This chain is Holo-[acyl-carrier-protein] synthase, found in Treponema pallidum (strain Nichols).